We begin with the raw amino-acid sequence, 533 residues long: Cytochrome P450 monooxygenase calL (533 aa).

The chain crosses the membrane as a helical span at residues 8 to 28 (TQLALLVWGIAVCVTLAIVVP). A glycan (N-linked (GlcNAc...) asparagine) is linked at N33. The tract at residues 123–148 (GKFKQDQSGRSKNPVPGHDVKPGQPR) is disordered. N-linked (GlcNAc...) asparagine glycosylation is present at N388. Position 467 (C467) interacts with heme.

Belongs to the cytochrome P450 family. It depends on heme as a cofactor.

It is found in the membrane. It participates in secondary metabolite biosynthesis. Its function is as follows. Cytochrome P450 monooxygenase; part of the gene cluster that mediates the biosynthesis of calbistrin A and related compounds. Calbistrin A is a secondary metabolite with an interesting structure that was recently found to have bioactivity against leukemia cells. It consists of two polyketides linked by an ester bond: a bicyclic decalin containing polyketide and a linear 12 carbon dioic acid structure. The polyketide synthase calA is probably responsible for forming the decalin moiety. Because calA lacks a designated enoylreductase (ER) domain, the required activity is provided by the trans-enoyl reductase calK. Following release from the PKS, calF then probably catalyzes the oxidation and the subsequent Diels Alder cycloisomerization that lead to the formation of the decalin moiety. The decalin polyketide backbone includes two C-methyl groups, at C7 and C11 in backbone, of which the C7 position is probably methylated by the methyltransferase domain of calA. A candidate for adding the methyl group at C11, if not done by CalA, is the cluster methyltransferase calH. Several additional tailoring enzymes within the cluster could be involved in the modification of the decalin polyketide product. Those include the 3 cytochrome P450 monooxygenases CalE, CalG and CalL, of which one might be responsible for the introduction of the extra hydroxyl group attached to the backbone of the decalin moiety, at position C9 in the backbone, that allows for attachment of the linear moiety. One tailoring enzyme activity that is expected to be involved in biosynthesis of calbistrin is an acyltransferase for connecting the two polyketide synthase products, and which could be performed by the cluster acyltransferase calJ. The enzyme responsible for the biosynthesis of the linear moiety, probably a second PKS, has not been identified yet. This is Cytochrome P450 monooxygenase calL from Penicillium decumbens.